A 536-amino-acid chain; its full sequence is Keratin, type II cytoskeletal 4 (536 aa).

Residues 1-145 (MISRQSSVRG…DPEIQKIRTA (145 aa)) form a head region. R13 is modified (omega-N-methylarginine). The interval 146 to 181 (EREQIKTLNNKFASFIDKVRFLEQQNKVLETKWNLL) is coil 1A. The IF rod domain maps to 146 to 457 (EREQIKTLNN…KLLEGEECRM (312 aa)). A linker 1 region spans residues 182–200 (QQQTTTTSPRNLDPFFETY). The tract at residues 201–293 (INALRKNLDT…LYEAELSQMQ (93 aa)) is coil 1B. Residues 294 to 316 (THVSDTSVVLSMDNNRNLDLDGI) are linker 12. The tract at residues 317 to 454 (IAEVRAQYEE…TYRKLLEGEE (138 aa)) is coil 2. The tract at residues 455–524 (CRMSGECKSA…TSSATITKRS (70 aa)) is tail. Residues 515–536 (TSSATITKRSPRTRQDPDGLQP) form a disordered region. Basic and acidic residues predominate over residues 527 to 536 (TRQDPDGLQP).

The protein belongs to the intermediate filament family. In terms of assembly, heterotetramer of two type I and two type II keratins. keratin-4 is generally associated with keratin-13.

The sequence is that of Keratin, type II cytoskeletal 4 from Rattus norvegicus (Rat).